Consider the following 79-residue polypeptide: Small ribosomal subunit protein bS18 (79 aa).

Belongs to the bacterial ribosomal protein bS18 family. Part of the 30S ribosomal subunit. Forms a tight heterodimer with protein bS6.

In terms of biological role, binds as a heterodimer with protein bS6 to the central domain of the 16S rRNA, where it helps stabilize the platform of the 30S subunit. The polypeptide is Small ribosomal subunit protein bS18 (Bradyrhizobium sp. (strain BTAi1 / ATCC BAA-1182)).